The chain runs to 198 residues: Ribonuclease HII (198 aa).

Residues 11–198 enclose the RNase H type-2 domain; that stretch reads TCIAGVDEVG…APVKRALGLA (188 aa). 3 residues coordinate a divalent metal cation: aspartate 17, glutamate 18, and aspartate 109.

This sequence belongs to the RNase HII family. Requires Mn(2+) as cofactor. It depends on Mg(2+) as a cofactor.

It is found in the cytoplasm. The enzyme catalyses Endonucleolytic cleavage to 5'-phosphomonoester.. In terms of biological role, endonuclease that specifically degrades the RNA of RNA-DNA hybrids. The polypeptide is Ribonuclease HII (Pectobacterium carotovorum subsp. carotovorum (strain PC1)).